A 212-amino-acid polypeptide reads, in one-letter code: Pyrrolidone-carboxylate peptidase (212 aa).

Residues E80, C143, and H165 contribute to the active site.

The protein belongs to the peptidase C15 family. As to quaternary structure, homotetramer.

Its subcellular location is the cytoplasm. The catalysed reaction is Release of an N-terminal pyroglutamyl group from a polypeptide, the second amino acid generally not being Pro.. Removes 5-oxoproline from various penultimate amino acid residues except L-proline. The chain is Pyrrolidone-carboxylate peptidase from Vibrio vulnificus (strain CMCP6).